We begin with the raw amino-acid sequence, 185 residues long: Ribosome-recycling factor (185 aa).

Belongs to the RRF family.

The protein localises to the cytoplasm. In terms of biological role, responsible for the release of ribosomes from messenger RNA at the termination of protein biosynthesis. May increase the efficiency of translation by recycling ribosomes from one round of translation to another. In Clostridium beijerinckii (strain ATCC 51743 / NCIMB 8052) (Clostridium acetobutylicum), this protein is Ribosome-recycling factor.